We begin with the raw amino-acid sequence, 399 residues long: Tryptophan synthase beta chain (399 aa).

Position 92 is an N6-(pyridoxal phosphate)lysine (lysine 92).

This sequence belongs to the TrpB family. Tetramer of two alpha and two beta chains. Pyridoxal 5'-phosphate is required as a cofactor.

It carries out the reaction (1S,2R)-1-C-(indol-3-yl)glycerol 3-phosphate + L-serine = D-glyceraldehyde 3-phosphate + L-tryptophan + H2O. Its pathway is amino-acid biosynthesis; L-tryptophan biosynthesis; L-tryptophan from chorismate: step 5/5. Its function is as follows. The beta subunit is responsible for the synthesis of L-tryptophan from indole and L-serine. This chain is Tryptophan synthase beta chain, found in Bordetella pertussis (strain Tohama I / ATCC BAA-589 / NCTC 13251).